Reading from the N-terminus, the 229-residue chain is Potassium/proton antiporter CemA (229 aa).

The next 4 membrane-spanning stretches (helical) occupy residues 6–26, 107–127, 152–172, and 190–210; these read AFIP…ISLC, IFNF…SFWG, FLIL…GWEL, and LSGL…YWIF.

Belongs to the CemA family.

The protein resides in the plastid. Its subcellular location is the chloroplast inner membrane. The catalysed reaction is K(+)(in) + H(+)(out) = K(+)(out) + H(+)(in). Its function is as follows. Contributes to K(+)/H(+) antiport activity by supporting proton efflux to control proton extrusion and homeostasis in chloroplasts in a light-dependent manner to modulate photosynthesis. Prevents excessive induction of non-photochemical quenching (NPQ) under continuous-light conditions. Indirectly promotes efficient inorganic carbon uptake into chloroplasts. In Aethionema cordifolium (Lebanon stonecress), this protein is Potassium/proton antiporter CemA.